Consider the following 428-residue polypeptide: MGPQRLLLVAAGLSLCGPLLSSRVPVRQPESEMTDATVNPRSFFLRNPGENTFELIPLGDEEEKNESTLPEGRAIYLNKSHSPPAPLAPFISEDASGYLTSPWLRLFIPSVYTFVFVVSLPLNILAIAVFVLKMKVKKPAVVYMLHLAMADVLFVSVLPLKISYYFSGSDWQFGSGMCRFATAAFYCNMYASIMLMTVISIDRFLAVVYPIQSLSWRTLGRANFTCLVIWVMAIMGVVPLLLKEQTTRVPGLNITTCHDVLNETLLQGFYSYYFSAFSAVFFLVPLIISTICYMSIIRCLSSSSVANRSKKSRALFLSAAVFCVFIVCFGPTNVLLIMHYLLLSDSPATEKAYFAYLLCVCVSSVSCCIDPLIYYYASSECQRHLYGILCCKESSDPNSYNSTGQLMPSKMDTCSSHLNNSIYKKLLA.

Positions 1-21 (MGPQRLLLVAAGLSLCGPLLS) are cleaved as a signal peptide. Positions 22–41 (SRVPVRQPESEMTDATVNPR) are cleaved as a propeptide — removed for receptor activation. The Extracellular portion of the chain corresponds to 42-105 (SFFLRNPGEN…SGYLTSPWLR (64 aa)). N-linked (GlcNAc...) asparagine glycans are attached at residues Asn-65 and Asn-78. A helical transmembrane segment spans residues 106-131 (LFIPSVYTFVFVVSLPLNILAIAVFV). At 132-140 (LKMKVKKPA) the chain is on the cytoplasmic side. A helical membrane pass occupies residues 141–160 (VVYMLHLAMADVLFVSVLPL). Topologically, residues 161–179 (KISYYFSGSDWQFGSGMCR) are extracellular. Cys-178 and Cys-257 are joined by a disulfide. A helical transmembrane segment spans residues 180–201 (FATAAFYCNMYASIMLMTVISI). The Cytoplasmic portion of the chain corresponds to 202–221 (DRFLAVVYPIQSLSWRTLGR). Residues 222–242 (ANFTCLVIWVMAIMGVVPLLL) traverse the membrane as a helical segment. At 243-271 (KEQTTRVPGLNITTCHDVLNETLLQGFYS) the chain is on the extracellular side. N-linked (GlcNAc...) asparagine glycosylation is found at Asn-253 and Asn-262. Residues 272-291 (YYFSAFSAVFFLVPLIISTI) traverse the membrane as a helical segment. Topologically, residues 292–314 (CYMSIIRCLSSSSVANRSKKSRA) are cytoplasmic. Residues 315–337 (LFLSAAVFCVFIVCFGPTNVLLI) form a helical membrane-spanning segment. At 338-352 (MHYLLLSDSPATEKA) the chain is on the extracellular side. A helical transmembrane segment spans residues 353 to 377 (YFAYLLCVCVSSVSCCIDPLIYYYA). At 378–428 (SSECQRHLYGILCCKESSDPNSYNSTGQLMPSKMDTCSSHLNNSIYKKLLA) the chain is on the cytoplasmic side. Ser-421 is modified (phosphoserine).

Belongs to the G-protein coupled receptor 1 family. Post-translationally, proteolytic cleavage by thrombin generates a new N-terminus that functions as a tethered ligand. Also proteolytically cleaved by cathepsin CTSG. In terms of processing, phosphorylated in the C-terminal tail; probably mediating desensitization prior to the uncoupling and internalization of the receptor.

It is found in the cell membrane. In terms of biological role, high affinity receptor that binds the activated thrombin, leading to calcium release from intracellular stores. The thrombin-activated receptor signaling pathway is mediated through PTX-insensitive G proteins, activation of phospholipase C resulting in the production of 1D-myo-inositol 1,4,5-trisphosphate (InsP3) which binds to InsP3 receptors causing calcium release from the stores. In astrocytes, the calcium released into the cytosol allows the Ca(2+)-dependent release of L-glutamate into the synaptic cleft through BEST1, that targets the neuronal postsynaptic GRIN2A/NMDAR receptor resulting in the synaptic plasticity regulation. May play a role in platelets activation and in vascular development. Mediates up-regulation of pro-inflammatory cytokines, such as MCP-1/CCL2 and IL6, triggered by coagulation factor Xa (F10) in cardiac fibroblasts and umbilical vein endothelial cells. This is Proteinase-activated receptor 1 from Cricetulus longicaudatus (Long-tailed dwarf hamster).